The following is a 60-amino-acid chain: MDPCECSKTGTCNCGGSCTCKNCSCTTCTKSCCPCCPSGCPKCASGCVCKGKTCDTTCCQ.

Methionine 1 carries the post-translational modification N-acetylmethionine. Residues 1-28 (MDPCECSKTGTCNCGGSCTCKNCSCTTC) form a beta region. A divalent metal cation-binding residues include cysteine 4, cysteine 6, cysteine 12, cysteine 14, cysteine 18, cysteine 20, cysteine 23, cysteine 25, cysteine 28, cysteine 32, cysteine 33, cysteine 35, cysteine 36, cysteine 40, cysteine 43, cysteine 47, cysteine 49, cysteine 54, cysteine 58, and cysteine 59. An alpha region spans residues 29-60 (TKSCCPCCPSGCPKCASGCVCKGKTCDTTCCQ).

Belongs to the metallothionein superfamily. Type 1 family.

Functionally, metallothioneins have a high content of cysteine residues that bind various heavy metals. The sequence is that of Metallothionein (mt) from Pseudopleuronectes americanus (Winter flounder).